The following is a 124-amino-acid chain: Protein MGF 110-8L (124 aa).

The signal sequence occupies residues 1–16 (MKVLILVLLAVVILQA). N-linked (GlcNAc...) asparagine; by host glycosylation is found at asparagine 76 and asparagine 94.

This sequence belongs to the asfivirus MGF 110 family.

Functionally, plays a role in virus cell tropism, and may be required for efficient virus replication in macrophages. The chain is Protein MGF 110-8L from Ornithodoros (relapsing fever ticks).